We begin with the raw amino-acid sequence, 90 residues long: Small ribosomal subunit protein uS15c (90 aa).

It belongs to the universal ribosomal protein uS15 family. As to quaternary structure, part of the 30S ribosomal subunit.

The protein localises to the plastid. It is found in the chloroplast. This Pelargonium hortorum (Common geranium) protein is Small ribosomal subunit protein uS15c (rps15-A).